Reading from the N-terminus, the 353-residue chain is Thiamine-phosphate synthase (353 aa).

The tract at residues Met1–Gly128 is unknown. Residues Leu129–Ala353 form a thiamine-phosphate synthase region. Residues Gln185–Lys189 and Asn217 contribute to the 4-amino-2-methyl-5-(diphosphooxymethyl)pyrimidine site. The Mg(2+) site is built by Asp218 and Asp237. Ser256 serves as a coordination point for 4-amino-2-methyl-5-(diphosphooxymethyl)pyrimidine. Position 282–284 (Thr282–Thr284) interacts with 2-[(2R,5Z)-2-carboxy-4-methylthiazol-5(2H)-ylidene]ethyl phosphate. Lys285 is a 4-amino-2-methyl-5-(diphosphooxymethyl)pyrimidine binding site. Position 312 (Gly312) interacts with 2-[(2R,5Z)-2-carboxy-4-methylthiazol-5(2H)-ylidene]ethyl phosphate.

This sequence belongs to the thiamine-phosphate synthase family. Mg(2+) serves as cofactor.

It catalyses the reaction 2-[(2R,5Z)-2-carboxy-4-methylthiazol-5(2H)-ylidene]ethyl phosphate + 4-amino-2-methyl-5-(diphosphooxymethyl)pyrimidine + 2 H(+) = thiamine phosphate + CO2 + diphosphate. The catalysed reaction is 2-(2-carboxy-4-methylthiazol-5-yl)ethyl phosphate + 4-amino-2-methyl-5-(diphosphooxymethyl)pyrimidine + 2 H(+) = thiamine phosphate + CO2 + diphosphate. The enzyme catalyses 4-methyl-5-(2-phosphooxyethyl)-thiazole + 4-amino-2-methyl-5-(diphosphooxymethyl)pyrimidine + H(+) = thiamine phosphate + diphosphate. Its pathway is cofactor biosynthesis; thiamine diphosphate biosynthesis; thiamine phosphate from 4-amino-2-methyl-5-diphosphomethylpyrimidine and 4-methyl-5-(2-phosphoethyl)-thiazole: step 1/1. Functionally, condenses 4-methyl-5-(beta-hydroxyethyl)thiazole monophosphate (THZ-P) and 2-methyl-4-amino-5-hydroxymethyl pyrimidine pyrophosphate (HMP-PP) to form thiamine monophosphate (TMP). The protein is Thiamine-phosphate synthase of Synechococcus sp. (strain CC9311).